The sequence spans 370 residues: MNEMTHRTKTRPVKVGNLTIGGNNELIIQSMTTTKTHDVEATVAEIKRLEEAGCQVVRVAVPDERAADAIADIKKQINIPLVADIHFDYRLALKAIEGGIDKVRINPGNIGRRHKVEAVVNAAKERGIPIRIGVNAGSLERHILEKYGYPTADGMVESALHHIKILEDLDFHDIIVSMKASDVNLAIEAYEKAARAFDYPLHLGITESGTLFAGTVKSAAGLGAILNKGIGNTLRISLSADPVEEVKVARELLKSFGLASNAATLISCPTCGRIEIDLISIANEVEEYISTLQVPIKVAVLGCAVNGPGEAREADIGIAGARGEGLLFRKGQVVRKVPEETMVEELKKEIDVIAAEMAAEREKEKETQEQ.

Cys268, Cys271, Cys303, and Glu310 together coordinate [4Fe-4S] cluster.

Belongs to the IspG family. Requires [4Fe-4S] cluster as cofactor.

The enzyme catalyses (2E)-4-hydroxy-3-methylbut-2-enyl diphosphate + oxidized [flavodoxin] + H2O + 2 H(+) = 2-C-methyl-D-erythritol 2,4-cyclic diphosphate + reduced [flavodoxin]. It participates in isoprenoid biosynthesis; isopentenyl diphosphate biosynthesis via DXP pathway; isopentenyl diphosphate from 1-deoxy-D-xylulose 5-phosphate: step 5/6. Converts 2C-methyl-D-erythritol 2,4-cyclodiphosphate (ME-2,4cPP) into 1-hydroxy-2-methyl-2-(E)-butenyl 4-diphosphate. The chain is 4-hydroxy-3-methylbut-2-en-1-yl diphosphate synthase (flavodoxin) from Bacillus cereus (strain B4264).